Reading from the N-terminus, the 2057-residue chain is Fer-1-like protein 5 (2057 aa).

C2 domains are found at residues 1-99, 152-265, 308-425, 1057-1188, 1213-1346, 1467-1587, and 1705-1853; these read MLRL…VLFV, PGST…TLLR, DDTD…EGVY, DTRP…MRWH, KLGE…AQDY, PKPP…AHCG, and GPPG…KQCS. Residues Asp1502, Asp1508, Asp1557, Phe1558, Asp1559, Ser1562, Asp1565, Asp1824, Ser1827, and Asp1830 each coordinate Ca(2+). The helical transmembrane segment at 1962-1982 threads the bilayer; the sequence is LIAFMVISIIALMLFNFIYSA.

Belongs to the ferlin family. In terms of assembly, interacts (via second C2 domain) with EHD1 and EHD2. Ca(2+) is required as a cofactor.

It is found in the cell membrane. The protein resides in the membrane. Plays a role in myoblast fusion; probable mediator of endocytic recycling for membrane trafficking events during myotube formation. The sequence is that of Fer-1-like protein 5 (FER1L5) from Homo sapiens (Human).